Here is a 464-residue protein sequence, read N- to C-terminus: Argininosuccinate lyase (464 aa).

The protein belongs to the lyase 1 family. Argininosuccinate lyase subfamily.

It localises to the cytoplasm. It catalyses the reaction 2-(N(omega)-L-arginino)succinate = fumarate + L-arginine. It participates in amino-acid biosynthesis; L-arginine biosynthesis; L-arginine from L-ornithine and carbamoyl phosphate: step 3/3. This Desulfotalea psychrophila (strain LSv54 / DSM 12343) protein is Argininosuccinate lyase.